The sequence spans 498 residues: Actin-binding protein WASF2 (498 aa).

Disordered regions lie at residues 173-203 and 240-435; these read KEKR…KEEW and NVDA…AVSD. Over residues 252–263 the composition is skewed to low complexity; it reads SDSASSPSPSFS. Over residues 298 to 407 the composition is skewed to pro residues; sequence SHPPPAPPLG…PPPGPPPPPF (110 aa). A WH2 domain is found at 436 to 453; sequence ARSDLLSAIRQGFQLRRV. Serine 474 carries the post-translational modification Phosphoserine.

The protein belongs to the SCAR/WAVE family. As to quaternary structure, binds actin and the Arp2/3 complex. Interacts with BAIAP2. Component of the WAVE2 complex composed of ABI1, CYFIP1/SRA1, NCKAP1/NAP1 (NCKAP1l/HEM1 in hematopoietic cells) and WASF2/WAVE2. Directly interacts with BRK1. Interacts with FNBP1L (via the SH3 domain). (Microbial infection) Interacts with human cytomegalovirus protein UL135. Expressed in all tissues with strongest expression in placenta, lung, and peripheral blood leukocytes, but not in skeletal muscle.

The protein localises to the cytoplasm. It localises to the cytoskeleton. Its subcellular location is the cell projection. It is found in the lamellipodium. The protein resides in the basolateral cell membrane. Downstream effector molecule involved in the transmission of signals from tyrosine kinase receptors and small GTPases to the actin cytoskeleton. Promotes formation of actin filaments. Part of the WAVE complex that regulates lamellipodia formation. The WAVE complex regulates actin filament reorganization via its interaction with the Arp2/3 complex. This is Actin-binding protein WASF2 from Homo sapiens (Human).